Consider the following 485-residue polypeptide: tRNA sulfurtransferase (485 aa).

The 105-residue stretch at 61-165 (EELIALLQRI…DDKMMLVKTR (105 aa)) folds into the THUMP domain. ATP-binding positions include 183–184 (LI), lysine 265, glycine 287, and glutamine 296. Cysteine 344 and cysteine 456 are joined by a disulfide. Residues 404–483 (LGENEVILDI…FSNVRVFAKN (80 aa)) form the Rhodanese domain. The Cysteine persulfide intermediate role is filled by cysteine 456.

This sequence belongs to the ThiI family.

The protein localises to the cytoplasm. It catalyses the reaction [ThiI sulfur-carrier protein]-S-sulfanyl-L-cysteine + a uridine in tRNA + 2 reduced [2Fe-2S]-[ferredoxin] + ATP + H(+) = [ThiI sulfur-carrier protein]-L-cysteine + a 4-thiouridine in tRNA + 2 oxidized [2Fe-2S]-[ferredoxin] + AMP + diphosphate. The catalysed reaction is [ThiS sulfur-carrier protein]-C-terminal Gly-Gly-AMP + S-sulfanyl-L-cysteinyl-[cysteine desulfurase] + AH2 = [ThiS sulfur-carrier protein]-C-terminal-Gly-aminoethanethioate + L-cysteinyl-[cysteine desulfurase] + A + AMP + 2 H(+). Its pathway is cofactor biosynthesis; thiamine diphosphate biosynthesis. Its function is as follows. Catalyzes the ATP-dependent transfer of a sulfur to tRNA to produce 4-thiouridine in position 8 of tRNAs, which functions as a near-UV photosensor. Also catalyzes the transfer of sulfur to the sulfur carrier protein ThiS, forming ThiS-thiocarboxylate. This is a step in the synthesis of thiazole, in the thiamine biosynthesis pathway. The sulfur is donated as persulfide by IscS. The sequence is that of tRNA sulfurtransferase from Haemophilus influenzae (strain 86-028NP).